The sequence spans 704 residues: Histone-lysine N-methyltransferase, H3 lysine-9 specific SUVH1 (704 aa).

Disordered regions lie at residues methionine 1–leucine 21 and proline 68–glycine 176. Composition is skewed to polar residues over residues glutamate 80 to proline 90 and serine 109 to glycine 121. The segment covering glycine 159–arginine 170 has biased composition (basic residues). The YDG domain maps to glycine 265–arginine 412. Residues proline 487–glycine 548 form the Pre-SET domain. Positions 489, 491, 495, 502, 504, 530, 534, 536, and 540 each coordinate Zn(2+). In terms of domain architecture, SET spans alanine 551 to glycine 681. S-adenosyl-L-methionine contacts are provided by residues arginine 561–tryptophan 563, aspartate 593, tyrosine 595, arginine 635, and asparagine 638–histidine 639. Zn(2+)-binding residues include cysteine 641, cysteine 692, cysteine 694, and cysteine 699. The Post-SET domain maps to arginine 688–tyrosine 704.

It belongs to the class V-like SAM-binding methyltransferase superfamily. Histone-lysine methyltransferase family. Suvar3-9 subfamily. In terms of assembly, interacts with LHP1. In terms of tissue distribution, expressed in roots, stems, leaves and flowers.

It localises to the nucleus. It is found in the chromosome. The enzyme catalyses N(6)-methyl-L-lysyl(27)-[histone H3] + S-adenosyl-L-methionine = N(6),N(6)-dimethyl-L-lysyl(27)-[histone H3] + S-adenosyl-L-homocysteine + H(+). It carries out the reaction L-lysyl(9)-[histone H3] + 2 S-adenosyl-L-methionine = N(6),N(6)-dimethyl-L-lysyl(9)-[histone H3] + 2 S-adenosyl-L-homocysteine + 2 H(+). The catalysed reaction is L-lysyl(27)-[histone H3] + S-adenosyl-L-methionine = N(6)-methyl-L-lysyl(27)-[histone H3] + S-adenosyl-L-homocysteine + H(+). In terms of biological role, histone methyltransferase. Methylates in vitro both 'Lys-9' and 'Lys-27' of histone H3. Required for in vivo dimethylation of 'Lys-9'. H3 'Lys-9' methylation represents a specific tag for epigenetic control for plant development and transcriptional repression. The polypeptide is Histone-lysine N-methyltransferase, H3 lysine-9 specific SUVH1 (SUVH1) (Nicotiana tabacum (Common tobacco)).